Here is a 571-residue protein sequence, read N- to C-terminus: Proline--tRNA ligase (571 aa).

Belongs to the class-II aminoacyl-tRNA synthetase family. ProS type 1 subfamily. In terms of assembly, homodimer.

The protein resides in the cytoplasm. The catalysed reaction is tRNA(Pro) + L-proline + ATP = L-prolyl-tRNA(Pro) + AMP + diphosphate. Its function is as follows. Catalyzes the attachment of proline to tRNA(Pro) in a two-step reaction: proline is first activated by ATP to form Pro-AMP and then transferred to the acceptor end of tRNA(Pro). As ProRS can inadvertently accommodate and process non-cognate amino acids such as alanine and cysteine, to avoid such errors it has two additional distinct editing activities against alanine. One activity is designated as 'pretransfer' editing and involves the tRNA(Pro)-independent hydrolysis of activated Ala-AMP. The other activity is designated 'posttransfer' editing and involves deacylation of mischarged Ala-tRNA(Pro). The misacylated Cys-tRNA(Pro) is not edited by ProRS. The protein is Proline--tRNA ligase of Actinobacillus succinogenes (strain ATCC 55618 / DSM 22257 / CCUG 43843 / 130Z).